The following is a 102-amino-acid chain: Protein translation factor SUI1 homolog (102 aa).

It belongs to the SUI1 family.

The protein is Protein translation factor SUI1 homolog of Methanosarcina acetivorans (strain ATCC 35395 / DSM 2834 / JCM 12185 / C2A).